The primary structure comprises 304 residues: Type II methyltransferase M.HindV (304 aa).

The 299-residue stretch at 1–299 folds into the SAM-dependent MTase C5-type domain; sequence MKCVDLFSGC…SAIINFEKEP (299 aa). Cysteine 75 is a catalytic residue.

The protein belongs to the class I-like SAM-binding methyltransferase superfamily. C5-methyltransferase family.

The enzyme catalyses a 2'-deoxycytidine in DNA + S-adenosyl-L-methionine = a 5-methyl-2'-deoxycytidine in DNA + S-adenosyl-L-homocysteine + H(+). Its function is as follows. A methylase, recognizes the double-stranded sequence 5'-GRCGYC-3', methylates C-? on both strands, and protects the DNA from cleavage by the HindV endonuclease. In Haemophilus influenzae (strain ATCC 51907 / DSM 11121 / KW20 / Rd), this protein is Type II methyltransferase M.HindV (hindVM).